Here is a 443-residue protein sequence, read N- to C-terminus: Trigger factor (443 aa).

The PPIase FKBP-type domain maps to A161–P246.

The protein belongs to the FKBP-type PPIase family. Tig subfamily.

It is found in the cytoplasm. It carries out the reaction [protein]-peptidylproline (omega=180) = [protein]-peptidylproline (omega=0). Involved in protein export. Acts as a chaperone by maintaining the newly synthesized protein in an open conformation. Functions as a peptidyl-prolyl cis-trans isomerase. This chain is Trigger factor, found in Nitrosococcus oceani (strain ATCC 19707 / BCRC 17464 / JCM 30415 / NCIMB 11848 / C-107).